A 766-amino-acid chain; its full sequence is Single-minded homolog 1 (766 aa).

The bHLH domain maps to 1-53; sequence MKEKSKNAARTRREKENSEFYELAKLLPLPSAITSQLDKASIIRLTTSYLKMR. PAS domains follow at residues 77–147 and 218–288; these read GREL…QPYH and PPSA…LVKG. In terms of domain architecture, PAC spans 292–335; the sequence is TKYYRFLAKHGGWVWVQSYATIVHNSRSSRPHCIVSVNYVLTDT. Positions 336 to 766 constitute a Single-minded C-terminal domain; it reads EYKGLQLSLD…GTSVIITNGS (431 aa). The segment covering 353-365 has biased composition (polar residues); it reads AFSYTSSSTPTMT. Disordered stretches follow at residues 353-431, 528-563, and 642-662; these read AFSY…SQHD, WDEDSVVSSPDPGSASESGDRYRTEQYQSSPHEPSK, and SPRENDYDNSPTALSRISSPN. Positions 368–387 match the Nuclear localization signal motif; it reads RKGAKSRLSSSKSKSRTSPY. The segment covering 373-385 has biased composition (low complexity); the sequence is SRLSSSKSKSRTS. Positions 394–404 are enriched in basic and acidic residues; the sequence is HTERSESDHDS. Polar residues predominate over residues 649–662; it reads DNSPTALSRISSPN.

Efficient DNA binding requires dimerization with another bHLH protein. Heterodimer; forms a heterodimer with ARNT, ARNT2.

Its subcellular location is the nucleus. Its function is as follows. Transcriptional factor that may have pleiotropic effects during embryogenesis and in the adult. This is Single-minded homolog 1 (SIM1) from Pan troglodytes (Chimpanzee).